A 966-amino-acid chain; its full sequence is Dynamin-like GTPase OPA1, mitochondrial (966 aa).

The transit peptide at 1–86 (MLRAGSVVTC…GGHGYQQHRT (86 aa)) directs the protein to the mitochondrion. Residues 87-95 (FWVARLAAR) lie on the Mitochondrial matrix side of the membrane. The chain crosses the membrane as a helical span at residues 96-112 (LLKLRYILLGSAVGGGY). The Mitochondrial intermembrane portion of the chain corresponds to 113-776 (TAKKTYDEWK…SVIADMVGPD (664 aa)). The disordered stretch occupies residues 189 to 217 (ESALRAPDVPPASAAMADSGDKQFKKSSD). Residues 207–217 (SGDKQFKKSSD) show a composition bias toward basic and acidic residues. Residues 213-259 (KKSSDKEKVDQLQEELLRTQLKYQRMLERLEKENKELRKVVLQKDDK) are a coiled coil. The Dynamin-type G domain occupies 291 to 567 (QDHLPRVVVV…FWKMVRESVE (277 aa)). Residues 301–308 (GDQSAGKT) are G1 motif. GTP-binding residues include S304, G306, K307, T308, S309, and G323. A Mg(2+)-binding site is contributed by T308. The tract at residues 327 to 330 (MMTR) is G2 motif. The Mg(2+) site is built by T329 and D404. The interval 404–407 (DLPG) is G3 motif. The interval 473-476 (TKVD) is G4 motif. 3 residues coordinate GTP: K474, D476, and T509. The interval 507-510 (VVTG) is G5 motif. Stalk region stretches follow at residues 595–842 (DRNE…IKDT) and 880–934 (CNDV…VQLI). Positions 742-862 (TDKPQWDAAI…QKALLHCNLC (121 aa)) are paddle region. Residues 777 to 787 (WKQRWMSWKNR) lie within the membrane without spanning it. The Mitochondrial intermembrane segment spans residues 788–966 (TPEQHTRNET…AFIEALHKEK (179 aa)). An intrachain disulfide couples C862 to C880. A coiled-coil region spans residues 901–966 (RQQLTNTEVR…AFIEALHKEK (66 aa)).

It belongs to the TRAFAC class dynamin-like GTPase superfamily. Dynamin/Fzo/YdjA family. In terms of assembly, oligomeric complex consisting of membrane-bound and soluble forms of OPA1. Post-translationally, cleaved by OMA1 or YME1L downstream of the transmembrane region in response to different signals to generate soluble forms. Cleaved by OMA1 at position S1 following stress conditions, generating the short soluble form (Dynamin-like GTPase OPA1, short form; S-OPA1).

The protein resides in the mitochondrion inner membrane. Its subcellular location is the mitochondrion intermembrane space. It catalyses the reaction GTP + H2O = GDP + phosphate + H(+). Functionally, dynamin-related GTPase that is essential for normal mitochondrial morphology by mediating fusion of the mitochondrial inner membranes, regulating cristae morphology and maintaining respiratory chain function. Exists in two forms: the transmembrane, long form (Dynamin-like GTPase OPA1, long form; L-OPA1), which is tethered to the inner mitochondrial membrane, and the short soluble form (Dynamin-like GTPase OPA1, short form; S-OPA1), which results from proteolytic cleavage and localizes in the intermembrane space. Both forms (L-OPA1 and S-OPA1) cooperate to catalyze the fusion of the mitochondrial inner membrane. The equilibrium between L-OPA1 and S-OPA1 is essential: excess levels of S-OPA1, produced by cleavage by OMA1 following loss of mitochondrial membrane potential, lead to an impaired equilibrium between L-OPA1 and S-OPA1, inhibiting mitochondrial fusion. The balance between L-OPA1 and S-OPA1 also influences cristae shape and morphology. Its role in mitochondrial morphology is required for mitochondrial genome maintenance. Its function is as follows. Constitutes the transmembrane long form (L-OPA1) that plays a central role in mitochondrial inner membrane fusion and cristae morphology. L-OPA1 and the soluble short form (S-OPA1) form higher-order helical assemblies that coordinate the fusion of mitochondrial inner membranes. Inner membrane-anchored L-OPA1 molecules initiate membrane remodeling by recruiting soluble S-OPA1 to rapidly polymerize into a flexible cylindrical scaffold encaging the mitochondrial inner membrane. Once at the membrane surface, the formation of S-OPA1 helices induce bilayer curvature. OPA1 dimerization through the paddle region, which inserts into cardiolipin-containing membrane, promotes GTP hydrolysis and the helical assembly of a flexible OPA1 lattice on the membrane, which drives membrane curvature and mitochondrial fusion. Plays a role in the maintenance and remodeling of mitochondrial cristae, some invaginations of the mitochondrial inner membrane that provide an increase in the surface area. Probably acts by forming helical filaments at the inside of inner membrane tubes with the shape and dimensions of crista junctions. Constitutes the soluble short form (S-OPA1) generated by cleavage by OMA1, which plays a central role in mitochondrial inner membrane fusion and cristae morphology. The transmembrane long form (L-OPA1) and the S-OPA1 form higher-order helical assemblies that coordinate the fusion of mitochondrial inner membranes. Inner membrane-anchored L-OPA1 molecules initiate membrane remodeling by recruiting soluble S-OPA1 to rapidly polymerize into a flexible cylindrical scaffold encaging the mitochondrial inner membrane. Once at the membrane surface, the formation of S-OPA1 helices induce bilayer curvature. OPA1 dimerization through the paddle region, which inserts into cardiolipin-containing membrane, promotes GTP hydrolysis and the helical assembly of a flexible OPA1 lattice on the membrane, which drives membrane curvature and mitochondrial fusion. Excess levels of S-OPA1 produced by cleavage by OMA1 following stress conditions that induce loss of mitochondrial membrane potential, lead to an impaired equilibrium between L-OPA1 and S-OPA1, thereby inhibiting mitochondrial fusion. Plays a role in the maintenance and remodeling of mitochondrial cristae, some invaginations of the mitochondrial inner membrane that provide an increase in the surface area. Probably acts by forming helical filaments at the inside of inner membrane tubes with the shape and dimensions of crista junctions. The protein is Dynamin-like GTPase OPA1, mitochondrial of Danio rerio (Zebrafish).